A 154-amino-acid chain; its full sequence is MTPKLVIYTDGACRGNPGPGGWGALLMYGDKKKEIMGGDLATTNNRMELMAAIQALEALNKPTKAELHTDSQYVMKGVTQWIHGWKAKGWKTADKSPVKNVDLWQRLDAARARHEVDWRWVKGHAGHVHNERADELARLGMLKTLGERGSGKAV.

The RNase H type-1 domain occupies 1–142 (MTPKLVIYTD…ADELARLGML (142 aa)). 4 residues coordinate Mg(2+): aspartate 10, glutamate 48, aspartate 70, and aspartate 134.

This sequence belongs to the RNase H family. As to quaternary structure, monomer. Mg(2+) is required as a cofactor.

Its subcellular location is the cytoplasm. It carries out the reaction Endonucleolytic cleavage to 5'-phosphomonoester.. Its function is as follows. Endonuclease that specifically degrades the RNA of RNA-DNA hybrids. The sequence is that of Ribonuclease H from Caulobacter sp. (strain K31).